The following is a 629-amino-acid chain: MGYNAGSYDVIVIGAGHAGCEAGLAAARMGSKTLMLTINLDMVAFMPCNPSVGGPAKGIVVREIDALGGEMGRNIDKTHIQMRMLNTGKGPAVRALRAQADKFSYQHELKKTIEETPNLTLFQGMVERLIVEDGECKGVITQAGAEYTAKTVVITTGTFLRGEIIMGDLKYSSGPNNQQPSITLSEHLEELGFDLVRFKTGTPPRVNSNTIDYSKTEIQPGDDKPRAFSFETTKFIMDQIPCWLTYTSTETHRLIDENLHRSAMYSGMIKGTGPRYCPSIEDKVVRFNDKPRHQIFLEPEGRNTQEVYVQGLSTSLPEDVQRDMLRTIPGLENVEMMRTGYAIEYDAIVPTQLWPTLETKKIKNLYTAGQINGTSGYEEAAGQGLMAGINAACRSLGKKEVILGREDAYIGVLIDDLVTKGTNEPYRLLTSRAEYRLLLRHDNADLRLTEIGREIGLITEERYERFTNKKLQIEQEKERLSSIIIKPRPEVQELIRNIGGSELKDGIRASDLLRRPEMTYEHIHLLVPSEVELSDEVKEQVEIQIKYEGYIEKSLQQVERMKKMENKKIPVDIDYDAISSLASEARQKLKDVRPLSMGQASRISGVNPADISILLVYIEQGKIARVSNQ.

Residues 14–19, Val-126, and Ser-181 each bind FAD; that span reads GAGHAG. NAD(+) is bound at residue 273-287; that stretch reads GPRYCPSIEDKVVRF. An FAD-binding site is contributed by Gln-370.

It belongs to the MnmG family. Homodimer. Heterotetramer of two MnmE and two MnmG subunits. Requires FAD as cofactor.

It localises to the cytoplasm. Functionally, NAD-binding protein involved in the addition of a carboxymethylaminomethyl (cmnm) group at the wobble position (U34) of certain tRNAs, forming tRNA-cmnm(5)s(2)U34. This Bacillus cereus (strain ZK / E33L) protein is tRNA uridine 5-carboxymethylaminomethyl modification enzyme MnmG.